The following is a 1118-amino-acid chain: Protein SUPPRESSOR OF NPR1-1 CONSTITUTIVE 4 (1118 aa).

Residues 1–35 (MNSQQSTRTKQMLQQSSTHLLCGVVLLQLFAAQVD) form the signal peptide. The Extracellular portion of the chain corresponds to 36–751 (AQRSTSPWQT…PLRNFLKVIR (716 aa)). The region spanning 51 to 353 (PLVIARGGFS…DFPLTASASV (303 aa)) is the GP-PDE 1 domain. 13 N-linked (GlcNAc...) asparagine glycosylation sites follow: Asn-106, Asn-195, Asn-251, Asn-260, Asn-318, Asn-335, Asn-362, Asn-422, Asn-433, Asn-497, Asn-557, Asn-573, and Asn-656. One can recognise a GP-PDE 2 domain in the interval 369–670 (FLVISKNGAS…EFPYTAARYK (302 aa)). A helical transmembrane segment spans residues 752–772 (IVSWSVAGVVLFLVLLTLVFC). Residues 773-1118 (FHRKRETRLR…SEDVSVYTEG (346 aa)) lie on the Cytoplasmic side of the membrane. The 290-residue stretch at 805 to 1094 (KSFAEVVGRG…ALEVPPRPVL (290 aa)) folds into the Protein kinase domain. ATP-binding positions include 811–819 (VGRGGFGIV) and Lys-833. Residue Asp-928 is the Proton acceptor of the active site.

In the N-terminal section; belongs to the glycerophosphoryl diester phosphodiesterase family. It in the C-terminal section; belongs to the protein kinase superfamily. Ser/Thr protein kinase family. Expressed in shoots, rosette and cauline leaves, stems, flowers and siliques.

It localises to the cell membrane. It carries out the reaction a sn-glycero-3-phosphodiester + H2O = an alcohol + sn-glycerol 3-phosphate + H(+). The enzyme catalyses L-seryl-[protein] + ATP = O-phospho-L-seryl-[protein] + ADP + H(+). The catalysed reaction is L-threonyl-[protein] + ATP = O-phospho-L-threonyl-[protein] + ADP + H(+). Its function is as follows. Atypical receptor-like kinase involved in disease resistance. In Arabidopsis thaliana (Mouse-ear cress), this protein is Protein SUPPRESSOR OF NPR1-1 CONSTITUTIVE 4.